The following is a 116-amino-acid chain: Propanediol dehydratase-reactivating factor small subunit (116 aa).

Glu31 serves as a coordination point for Mg(2+).

Belongs to the DdrB/PduH family. In terms of assembly, forms a heterotetramer PduG(2)/PduH(2). The cofactor is Mg(2+).

The protein localises to the bacterial microcompartment. The catalysed reaction is ATP + H2O = ADP + phosphate + H(+). It participates in polyol metabolism; 1,2-propanediol degradation. Functionally, small subunit of the propanediol dehydratase-reactivating factor (DDR), which reactivates suicidally inhibited adenosylcobalamin-dependent propanediol dehydratase (diol dehydratase, DDH) found in the bacterial microcompartment (BMC) dedicated to 1,2-propanediol (1,2-PD) degradation. Reactivates inactivated DDH in the presence of ATP, Mg(2+) and free adenosylcobalamin (AdoCbl), by mediating the exchange of the tightly bound damaged cofactor AdoCbl for a free intact one. In terms of biological role, expression of a cosmid containing the full 21-gene pdu operon in E.coli allows E.coli to grow on 1,2-propanediol (1,2-PD) with the appearance of bacterial microcompartments (BMC) in its cytoplasm. Its function is as follows. The 1,2-PD-specific bacterial microcompartment (BMC) concentrates low levels of 1,2-PD catabolic enzymes, concentrates volatile reaction intermediates thus enhancing pathway flux and keeps the level of toxic, mutagenic propionaldehyde low. The sequence is that of Propanediol dehydratase-reactivating factor small subunit from Citrobacter freundii.